We begin with the raw amino-acid sequence, 394 residues long: uncharacterized protein (394 aa).

This sequence belongs to the mycobacterial PPE family.

This is an uncharacterized protein from Mycobacterium tuberculosis (strain CDC 1551 / Oshkosh).